Consider the following 585-residue polypeptide: Stage II sporulation protein E (585 aa).

2 helical membrane-spanning segments follow: residues 40–57 and 70–86; these read LGAR…GLYA and SLTA…FVLK. The region spanning 355-565 is the PPM-type phosphatase domain; sequence DTGVAHAAKG…DDMTVVVAKL (211 aa).

The protein resides in the cell membrane. It catalyses the reaction O-phospho-L-seryl-[protein] + H2O = L-seryl-[protein] + phosphate. It carries out the reaction O-phospho-L-threonyl-[protein] + H2O = L-threonyl-[protein] + phosphate. Functionally, normally needed for pro-sigma E processing during sporulation but can be bypassed in vegetative cells. Activates SpoIIAA by dephosphorylation. In Priestia megaterium (Bacillus megaterium), this protein is Stage II sporulation protein E (spoIIE).